The sequence spans 1936 residues: Potassium channel K1 (1936 aa).

A run of 6 helical transmembrane segments spans residues 175 to 195 (IIILYIIMLEFGSMLISYILL), 598 to 618 (VWIIAILIRIILWCIVWLWAA), 643 to 663 (GYIECTFQWCGVLDYLFGLYF), 670 to 690 (YIFSFFSLIDFITTPVSSFIM), 701 to 721 (TYWFLILGPLRFLRLVRAEST), and 734 to 754 (IIIIGIIILSLAILFTFSGIM). Positions 772-788 (FVYFGVITMSTVGYGDY) form an intramembrane region, pore-forming. Residues 791-811 (VTPAGKCLTMFIIVTCFTFVG) form a helical membrane-spanning segment. A coiled-coil region spans residues 1141–1185 (DTSSMINYKSKSRVNYKMVKGTKNEFIRNQNYNINSIYYANNDNM).

The protein localises to the membrane. It carries out the reaction K(+)(in) = K(+)(out). Its activity is regulated as follows. Partially inhibited by Ba(2+) and quinine. Probably insensitive to tetraethylammonium (TEA). Functionally, likely a predominant potassium channel in the erythrocytic stages of parasites. Mediates transmembrane potassium transport. Required for the development of oocysts in the mosquito midgut. The polypeptide is Potassium channel K1 (Plasmodium berghei (strain Anka)).